A 501-amino-acid polypeptide reads, in one-letter code: DEAD-box ATP-dependent RNA helicase 36 (501 aa).

The tract at residues 1 to 68 is disordered; sequence MEVDGEARPF…AAAVTEHAGD (68 aa). Residues 36 to 46 show a composition bias toward pro residues; sequence EEPPNPSPSPA. The span at 59–68 shows a compositional bias: low complexity; sequence AAAVTEHAGD. Residues 77–105 carry the Q motif motif; sequence STFAELGLSQWLVDVCDSLGMRVPTAVQR. The 174-residue stretch at 108–281 folds into the Helicase ATP-binding domain; sequence IPRALEGRDV…ELSGNNSYFF (174 aa). 121 to 128 is an ATP binding site; that stretch reads AETGSGKT. Residues 229 to 232 carry the DEAD box motif; it reads DEAD. The Helicase C-terminal domain occupies 292–456; that stretch reads TLKQLYIHVP…AYDGEMRDVN (165 aa). The segment covering 473–486 has biased composition (basic and acidic residues); it reads MADEGHEDKVQARK. The interval 473–501 is disordered; the sequence is MADEGHEDKVQARKEQKKRAQERKRKHDE. Positions 475 to 501 form a coiled coil; sequence DEGHEDKVQARKEQKKRAQERKRKHDE. Residues 487–501 show a composition bias toward basic residues; the sequence is EQKKRAQERKRKHDE.

It belongs to the DEAD box helicase family. DDX49/DBP8 subfamily.

The catalysed reaction is ATP + H2O = ADP + phosphate + H(+). This chain is DEAD-box ATP-dependent RNA helicase 36, found in Oryza sativa subsp. japonica (Rice).